Consider the following 110-residue polypeptide: Parvalbumin alpha (110 aa).

At S2 the chain carries N-acetylserine. Phosphoserine is present on residues S2 and S24. 2 EF-hand domains span residues 39–74 (KSPE…FSPD) and 78–110 (LSVK…VAES). Residues D52, D54, S56, F58, E60, E63, D91, D93, D95, K97, and E102 each coordinate Ca(2+).

Belongs to the parvalbumin family.

In terms of biological role, in muscle, parvalbumin is thought to be involved in relaxation after contraction. It binds two calcium ions. The polypeptide is Parvalbumin alpha (PVALB) (Bos taurus (Bovine)).